Reading from the N-terminus, the 436-residue chain is 3-ketoacyl-CoA thiolase (436 aa).

The active-site Acyl-thioester intermediate is Cys-99. Residues His-392 and Cys-422 each act as proton acceptor in the active site.

It belongs to the thiolase-like superfamily. Thiolase family. Heterotetramer of two alpha chains (FadJ) and two beta chains (FadI).

The protein localises to the cytoplasm. The catalysed reaction is an acyl-CoA + acetyl-CoA = a 3-oxoacyl-CoA + CoA. The protein operates within lipid metabolism; fatty acid beta-oxidation. Catalyzes the final step of fatty acid oxidation in which acetyl-CoA is released and the CoA ester of a fatty acid two carbons shorter is formed. The sequence is that of 3-ketoacyl-CoA thiolase from Shewanella halifaxensis (strain HAW-EB4).